Here is an 804-residue protein sequence, read N- to C-terminus: Endoplasmin (804 aa).

The signal sequence occupies residues Met-1–Ala-21. The short motif at Ser-42–Thr-44 is the SRT pseudosubstrate motif element. N-linked (GlcNAc...) asparagine glycosylation occurs at Asn-62. Residue Ser-64 is modified to Phosphoserine. N-linked (GlcNAc...) asparagine glycosylation is present at Asn-107. The ATP site is built by Asn-107, Asp-149, and Asn-162. Position 168 is an N6-(2-hydroxyisobutyryl)lysine (Lys-168). Phosphoserine is present on Ser-172. Phe-199 contributes to the ATP binding site. Residue Asn-217 is glycosylated (N-linked (GlcNAc...) asparagine). A disordered region spans residues Thr-288–Thr-323. Positions Val-289 to Glu-317 are enriched in acidic residues. A phosphoserine mark is found at Ser-306 and Ser-403. An N6-succinyllysine modification is found at Lys-404. N-linked (GlcNAc...) asparagine glycosylation is present at Asn-445. Ser-447 carries the post-translational modification Phosphoserine. N6-acetyllysine is present on Lys-479. Asn-481 and Asn-502 each carry an N-linked (GlcNAc...) asparagine glycan. Lys-633 carries the N6-succinyllysine modification. The disordered stretch occupies residues Asp-750 to Leu-804. A compositionally biased stretch (acidic residues) spans Glu-757–Gln-791. At Thr-786 the chain carries Phosphothreonine. Basic and acidic residues predominate over residues Glu-792–Leu-804. The short motif at Lys-801–Leu-804 is the Prevents secretion from ER element.

This sequence belongs to the heat shock protein 90 family. In terms of assembly, homodimer; disulfide-linked. Component of an EIF2 complex at least composed of CELF1/CUGBP1, CALR, CALR3, EIF2S1, EIF2S2, HSP90B1 and HSPA5. Part of a large chaperone multiprotein complex comprising DNAJB11, HSP90B1, HSPA5, HYOU, PDIA2, PDIA4, PDIA6, PPIB, SDF2L1, UGGT1 and very small amounts of ERP29, but not, or at very low levels, CALR nor CANX. Interacts with AIMP1; regulates its retention in the endoplasmic reticulum. Hyperglycosylated form interacts with OS9; promoting its degradation by the endoplasmic reticulum associated degradation (ERAD). Interacts with CNPY3. This interaction is disrupted in the presence of ATP. Interacts with TLR4 and TLR9, but not with TLR3. Interacts with MZB1 in a calcium-dependent manner. Interacts with METTL23. Interacts with IL1B; the interaction facilitates cargo translocation into the ERGIC. Interacts with EIF2AK3. Post-translationally, phosphorylated by CK2. In terms of processing, N-glycosylated cotranslationally at Asn-217 by STT3A-containing OST-A complex: this glycosylation is constitutive. In response to various stress, 5 additional facultative sites (Asn-62, Asn-107, Asn-445, Asn-481 and Asn-502) can be glycosylated post-translationally by STT3B-containing OST-B complex, leading to a hyperglycosylated form that is degraded by the ER-associated degradation (ERAD) pathway. In normal conditions, the OST-A complex together with CCDC134 prevent glycosylation at facultative sites during protein folding, thereby preventing hyperglycosylation. Mechanistically, nascent HSP90B1 is tethered during translation to a specialized CCDC134-containing translocon that forms a microenvironment for its folding, in which STT3A associates with the SRT pseudosubstrate motif, and prevents access to facultative glycosylation sites until folding is completed, rendering its facultative sites inaccessible to the OST-B complex.

The protein resides in the endoplasmic reticulum lumen. Its subcellular location is the sarcoplasmic reticulum lumen. The protein localises to the melanosome. It catalyses the reaction ATP + H2O = ADP + phosphate + H(+). ATP-dependent chaperone involved in the processing of proteins in the endoplasmic reticulum, regulating their transport. Together with MESD, acts as a modulator of the Wnt pathway by promoting the folding of LRP6, a coreceptor of the canonical Wnt pathway. When associated with CNPY3, required for proper folding of Toll-like receptors. Promotes folding and trafficking of TLR4 to the cell surface. May participate in the unfolding of cytosolic leaderless cargos (lacking the secretion signal sequence) such as the interleukin 1/IL-1 to facilitate their translocation into the ERGIC (endoplasmic reticulum-Golgi intermediate compartment) and secretion; the translocation process is mediated by the cargo receptor TMED10. This Pongo abelii (Sumatran orangutan) protein is Endoplasmin (HSP90B1).